The primary structure comprises 761 residues: Phosphoribosylformylglycinamidine synthase subunit PurL (761 aa).

Residue H49 is part of the active site. Residues Y52 and K92 each coordinate ATP. Position 94 (E94) interacts with Mg(2+). Residues 95–98 and R117 contribute to the substrate site; that span reads SHNH. Catalysis depends on H96, which acts as the Proton acceptor. Residue D118 coordinates Mg(2+). Position 241 (Q241) interacts with substrate. D269 provides a ligand contact to Mg(2+). Residue 318–320 participates in substrate binding; the sequence is ESQ. N502 and G539 together coordinate ATP. N540 is a Mg(2+) binding site. A substrate-binding site is contributed by S542.

It belongs to the FGAMS family. Monomer. Part of the FGAM synthase complex composed of 1 PurL, 1 PurQ and 2 PurS subunits.

The protein localises to the cytoplasm. The enzyme catalyses N(2)-formyl-N(1)-(5-phospho-beta-D-ribosyl)glycinamide + L-glutamine + ATP + H2O = 2-formamido-N(1)-(5-O-phospho-beta-D-ribosyl)acetamidine + L-glutamate + ADP + phosphate + H(+). It participates in purine metabolism; IMP biosynthesis via de novo pathway; 5-amino-1-(5-phospho-D-ribosyl)imidazole from N(2)-formyl-N(1)-(5-phospho-D-ribosyl)glycinamide: step 1/2. Part of the phosphoribosylformylglycinamidine synthase complex involved in the purines biosynthetic pathway. Catalyzes the ATP-dependent conversion of formylglycinamide ribonucleotide (FGAR) and glutamine to yield formylglycinamidine ribonucleotide (FGAM) and glutamate. The FGAM synthase complex is composed of three subunits. PurQ produces an ammonia molecule by converting glutamine to glutamate. PurL transfers the ammonia molecule to FGAR to form FGAM in an ATP-dependent manner. PurS interacts with PurQ and PurL and is thought to assist in the transfer of the ammonia molecule from PurQ to PurL. The polypeptide is Phosphoribosylformylglycinamidine synthase subunit PurL (Chlorobium chlorochromatii (strain CaD3)).